We begin with the raw amino-acid sequence, 156 residues long: Small ribosomal subunit protein uS7 (156 aa).

It belongs to the universal ribosomal protein uS7 family. As to quaternary structure, part of the 30S ribosomal subunit. Contacts proteins S9 and S11.

Functionally, one of the primary rRNA binding proteins, it binds directly to 16S rRNA where it nucleates assembly of the head domain of the 30S subunit. Is located at the subunit interface close to the decoding center, probably blocks exit of the E-site tRNA. This Anaeromyxobacter sp. (strain Fw109-5) protein is Small ribosomal subunit protein uS7.